We begin with the raw amino-acid sequence, 165 residues long: S-(2-succino)cysteine N-acetyltransferase (165 aa).

Residues 3–162 (PRYRLAVERD…ITVYMKKQLR (160 aa)) enclose the N-acetyltransferase domain.

The protein belongs to the acetyltransferase family.

The enzyme catalyses S-(2-succino)-L-cysteine + acetyl-CoA = N-acetyl-S-(2-succino)-L-cysteine + CoA + H(+). It functions in the pathway amino-acid biosynthesis; L-cysteine biosynthesis. In terms of biological role, catalyzes the N-acetylation of S-(2-succino)cysteine. Is involved in a S-(2-succino)cysteine (2SC) degradation pathway that allows B.subtilis to grow on 2SC as a sole sulfur source, via its metabolization to cysteine. Moreover, 2SC is a toxic compound in B.subtilis at high exogenous concentrations, and this enzyme relieves 2SC toxicity via N-acetylation. This Bacillus subtilis (strain 168) protein is S-(2-succino)cysteine N-acetyltransferase.